A 155-amino-acid polypeptide reads, in one-letter code: Putative pre-16S rRNA nuclease (155 aa).

Belongs to the YqgF nuclease family.

It is found in the cytoplasm. Its function is as follows. Could be a nuclease involved in processing of the 5'-end of pre-16S rRNA. The sequence is that of Putative pre-16S rRNA nuclease from Xanthomonas campestris pv. campestris (strain B100).